Consider the following 121-residue polypeptide: UPF0102 protein Syncc9902_1284 (121 aa).

The protein belongs to the UPF0102 family.

This is UPF0102 protein Syncc9902_1284 from Synechococcus sp. (strain CC9902).